The primary structure comprises 1475 residues: Protein STU1 (1475 aa).

Disordered stretches follow at residues 870–913 and 1113–1134; these read REST…EPDL and DGES…NRPA. Residues 887–896 show a composition bias toward basic and acidic residues; the sequence is DGAHGGDARD.

This sequence belongs to the CLASP family. As to quaternary structure, interacts with microtubules.

The protein resides in the cytoplasm. It is found in the cytoskeleton. The protein localises to the nucleus. It localises to the spindle. Microtubule binding protein that promotes the stabilization of dynamic microtubules. Required for mitotic spindle formation. The sequence is that of Protein STU1 (STU1) from Eremothecium gossypii (strain ATCC 10895 / CBS 109.51 / FGSC 9923 / NRRL Y-1056) (Yeast).